A 195-amino-acid chain; its full sequence is Glutamyl-tRNA(Gln) amidotransferase subunit C, mitochondrial (195 aa).

A mitochondrion-targeting transit peptide spans 1 to 18; the sequence is MNLSTIGFQVIFKQRLRC.

This sequence belongs to the GatC family. In terms of assembly, subunit of the heterotrimeric GatCAB amidotransferase (AdT) complex, composed of A, B and C subunits.

It localises to the mitochondrion. It carries out the reaction L-glutamyl-tRNA(Gln) + L-glutamine + ATP + H2O = L-glutaminyl-tRNA(Gln) + L-glutamate + ADP + phosphate + H(+). In terms of biological role, allows the formation of correctly charged Gln-tRNA(Gln) through the transamidation of misacylated Glu-tRNA(Gln) in the mitochondria. The reaction takes place in the presence of glutamine and ATP through an activated gamma-phospho-Glu-tRNA(Gln). This is Glutamyl-tRNA(Gln) amidotransferase subunit C, mitochondrial from Brugia malayi (Filarial nematode worm).